We begin with the raw amino-acid sequence, 468 residues long: V-type proton ATPase subunit H (468 aa).

Belongs to the V-ATPase H subunit family. In terms of assembly, V-ATPase is a heteromultimeric enzyme made up of two complexes: the ATP-hydrolytic V1 complex and the proton translocation V0 complex. The V1 complex consists of three catalytic AB heterodimers that form a heterohexamer, three peripheral stalks each consisting of EG heterodimers, one central rotor including subunits D and F, and the regulatory subunits C and H. The proton translocation complex V0 consists of the proton transport subunit a, a ring of proteolipid subunits c9c'', rotary subunit d, subunits e and f, and the accessory subunits VhaAC45 and ATP6AP2.

Its function is as follows. Subunit of the V1 complex of vacuolar(H+)-ATPase (V-ATPase), a multisubunit enzyme composed of a peripheral complex (V1) that hydrolyzes ATP and a membrane integral complex (V0) that translocates protons. V-ATPase is responsible for acidifying and maintaining the pH of intracellular compartments and in some cell types, is targeted to the plasma membrane, where it is responsible for acidifying the extracellular environment. Subunit H is essential for V-ATPase activity, but not for the assembly of the complex. The protein is V-type proton ATPase subunit H (VhaSFD) of Drosophila melanogaster (Fruit fly).